The sequence spans 381 residues: Alkanesulfonate monooxygenase (381 aa).

Belongs to the SsuD family. As to quaternary structure, homotetramer.

It catalyses the reaction an alkanesulfonate + FMNH2 + O2 = an aldehyde + FMN + sulfite + H2O + 2 H(+). In terms of biological role, catalyzes the desulfonation of aliphatic sulfonates. The protein is Alkanesulfonate monooxygenase of Escherichia coli (strain SE11).